The primary structure comprises 519 residues: Tetratricopeptide repeat protein 31 (519 aa).

A coiled-coil region spans residues 147 to 197 (QKLLVTEEEANRLAEELVAEEERMKQKAEKKRLKKKRQKERKRQERLEQYC). The span at 175 to 187 (EKKRLKKKRQKER) shows a compositional bias: basic residues. 2 disordered regions span residues 175–230 (EKKR…EEDS) and 253–294 (RREK…VQAS). The residue at position 278 (serine 278) is a Phosphoserine. TPR repeat units lie at residues 305–338 (SQEL…NPQD), 339–372 (HRLF…RPGW), and 373–406 (PRGL…GSQP). Positions 474-506 (PSCHRSHPNQPLSQTQSRRPHPLKPQDPSKGWD) are disordered. A compositionally biased stretch (polar residues) spans 481–490 (PNQPLSQTQS).

This Homo sapiens (Human) protein is Tetratricopeptide repeat protein 31 (TTC31).